Consider the following 452-residue polypeptide: MTAPELRVDTFRAPEDAPKEPSAQQPRLPSSPSPAQALASYHHFPTNDQERWWEETGSLFSRFLEAGQYGLPQQYQFMFFFMHHLIPALGPYPQKWRSTISRSGLPIEFSLNFQKGSHRLLRIGFEPVSFLSGSSQDPFNRIPITDLLNRLSKLQLSNFDTPFFQHLLSKFQLSLSEVRQLQKQGSGPDAHPLKSQAAFGFDFNPDGAILVKGYVFPYLKAKAADVPVGTLIAEAVRTIDVERNQFTHAFGLINDYMQESTGYNEYTFLSCDFVETSEQRLKIYGAHTEVTWAKIAEMWTLGGRLIEEPEIIAGLARLKQIWSLLQIGEGSRAFKGGFDYDKSSATDQIASPIIWNYEIHPGSRFPVPKFYLPVHGENDLHVARALAQFWDSLGWPEHACAYPDTLQQLYPDQDISQTTRLQSWISYSYTAKRGVYMSVYYHSQSTYLWEED.

Residues 1–19 (MTAPELRVDTFRAPEDAPK) are compositionally biased toward basic and acidic residues. The tract at residues 1-38 (MTAPELRVDTFRAPEDAPKEPSAQQPRLPSSPSPAQAL) is disordered. A compositionally biased stretch (low complexity) spans 21–38 (PSAQQPRLPSSPSPAQAL). Residue Glu108 coordinates brevianamide F. Dimethylallyl diphosphate is bound by residues Arg122, Lys212, Tyr214, Lys282, Tyr284, Tyr371, Tyr436, and Tyr440.

The protein belongs to the tryptophan dimethylallyltransferase family. In terms of assembly, monomer.

The enzyme catalyses brevianamide F + dimethylallyl diphosphate = deoxybrevianamide E + diphosphate. It functions in the pathway alkaloid biosynthesis. Addition of 5 mM Mg(2+), Ca(2+) or Mn(2+) slightly enhances catalysis (about 100-120%). Significant reduction of enzyme activity (2%-35%) is observed with Cu(2+), Zn(2+), Fe(2+), or Sn(2+) (5 mM). Its function is as follows. Deoxybrevianamide E synthase; part of the gene cluster that mediates the biosynthesis of notoamide, a fungal indole alkaloid that belongs to a family of natural products containing a characteristic bicyclo[2.2.2]diazaoctane core. The first step of notoamide biosynthesis involves coupling of L-proline and L-tryptophan by the bimodular NRPS notE, to produce cyclo-L-tryptophan-L-proline called brevianamide F. The reverse prenyltransferase notF then acts as a deoxybrevianamide E synthase and converts brevianamide F to deoxybrevianamide E via reverse prenylation at C-2 of the indole ring leading to the bicyclo[2.2.2]diazaoctane core. Deoxybrevianamide E is further hydroxylated at C-6 of the indole ring, likely catalyzed by the cytochrome P450 monooxygenase notG, to yield 6-hydroxy-deoxybrevianamide E. 6-hydroxy-deoxybrevianamide E is a specific substrate of the prenyltransferase notC for normal prenylation at C-7 to produce 6-hydroxy-7-prenyl-deoxybrevianamide, also called notoamide S. As the proposed pivotal branching point in notoamide biosynthesis, notoamide S can be diverted to notoamide E through an oxidative pyran ring closure putatively catalyzed by either notH cytochrome P450 monooxygenase or the notD FAD-linked oxidoreductase. This step would be followed by an indole 2,3-epoxidation-initiated pinacol-like rearrangement catalyzed by the notB FAD-dependent monooxygenase leading to the formation of notoamide C and notoamide D. On the other hand notoamide S is converted to notoamide T by notH (or notD), a bifunctional oxidase that also functions as the intramolecular Diels-Alderase responsible for generation of (+)-notoamide T. To generate antipodal (-)-notoaminide T, notH' (or notD') in Aspergillus versicolor is expected to catalyze a Diels-Alder reaction leading to the opposite stereochemistry. The remaining oxidoreductase notD (or notH) likely catalyzes the oxidative pyran ring formation to yield (+)-stephacidin A. The FAD-dependent monooxygenase notI is highly similar to notB and is predicted to catalyze a similar conversion from (+)-stephacidin A to (-)-notoamide B via the 2,3-epoxidation of (+)-stephacidin A followed by a pinacol-type rearrangement. Finally, it remains unclear which enzyme could be responsible for the final hydroxylation steps leading to notoamide A and sclerotiamide. In Aspergillus sp. (strain MF297-2), this protein is Deoxybrevianamide E synthase notF.